A 120-amino-acid polypeptide reads, in one-letter code: Small ribosomal subunit protein uS13 (120 aa).

The disordered stretch occupies residues Pro97–Lys120.

The protein belongs to the universal ribosomal protein uS13 family. As to quaternary structure, part of the 30S ribosomal subunit. Forms a loose heterodimer with protein S19. Forms two bridges to the 50S subunit in the 70S ribosome.

Its function is as follows. Located at the top of the head of the 30S subunit, it contacts several helices of the 16S rRNA. In the 70S ribosome it contacts the 23S rRNA (bridge B1a) and protein L5 of the 50S subunit (bridge B1b), connecting the 2 subunits; these bridges are implicated in subunit movement. Contacts the tRNAs in the A and P-sites. This is Small ribosomal subunit protein uS13 from Nitratiruptor sp. (strain SB155-2).